The sequence spans 483 residues: Probable pectate lyase 12 (483 aa).

The first 24 residues, 1–24 (MMLQRSCIVLFFSLFLLVPQMVFS), serve as a signal peptide directing secretion. Residues Asn-27 and Asn-50 are each glycosylated (N-linked (GlcNAc...) asparagine). Positions 220, 244, and 248 each coordinate Ca(2+). Residue Arg-300 is part of the active site.

The protein belongs to the polysaccharide lyase 1 family. Ca(2+) serves as cofactor.

It carries out the reaction Eliminative cleavage of (1-&gt;4)-alpha-D-galacturonan to give oligosaccharides with 4-deoxy-alpha-D-galact-4-enuronosyl groups at their non-reducing ends.. The protein operates within glycan metabolism; pectin degradation; 2-dehydro-3-deoxy-D-gluconate from pectin: step 2/5. The protein is Probable pectate lyase 12 of Arabidopsis thaliana (Mouse-ear cress).